A 283-amino-acid chain; its full sequence is Formamidopyrimidine-DNA glycosylase (283 aa).

The active-site Schiff-base intermediate with DNA is Pro2. Glu3 functions as the Proton donor in the catalytic mechanism. The active-site Proton donor; for beta-elimination activity is Lys60. DNA contacts are provided by His100, Arg119, and Arg164. The segment at 249-283 (WVYGRENKPCRKCGVKILKAKVAGRGTHWCPNCQK) adopts an FPG-type zinc-finger fold. Arg273 serves as the catalytic Proton donor; for delta-elimination activity.

It belongs to the FPG family. As to quaternary structure, monomer. Requires Zn(2+) as cofactor.

It catalyses the reaction Hydrolysis of DNA containing ring-opened 7-methylguanine residues, releasing 2,6-diamino-4-hydroxy-5-(N-methyl)formamidopyrimidine.. The enzyme catalyses 2'-deoxyribonucleotide-(2'-deoxyribose 5'-phosphate)-2'-deoxyribonucleotide-DNA = a 3'-end 2'-deoxyribonucleotide-(2,3-dehydro-2,3-deoxyribose 5'-phosphate)-DNA + a 5'-end 5'-phospho-2'-deoxyribonucleoside-DNA + H(+). Functionally, involved in base excision repair of DNA damaged by oxidation or by mutagenic agents. Acts as a DNA glycosylase that recognizes and removes damaged bases. Has a preference for oxidized purines, such as 7,8-dihydro-8-oxoguanine (8-oxoG). Has AP (apurinic/apyrimidinic) lyase activity and introduces nicks in the DNA strand. Cleaves the DNA backbone by beta-delta elimination to generate a single-strand break at the site of the removed base with both 3'- and 5'-phosphates. The sequence is that of Formamidopyrimidine-DNA glycosylase from Prochlorococcus marinus (strain SARG / CCMP1375 / SS120).